The sequence spans 78 residues: Gas vesicle protein A (78 aa).

The interval 9-19 (LAEVLDRVLDK) is alpha helix 1. The interval 23 to 31 (VDVWARISL) is beta-strand 1. Positions 32 to 34 (VGI) are beta turn. Residues 35 to 43 (EILTVEARV) are beta-strand 2. The interval 48 to 67 (VDTFLHYAEEIAKIEQAELT) is alpha helix 2.

This sequence belongs to the gas vesicle GvpA family. As to quaternary structure, the gas vesicle shell is 2 nm thick and consists of a single layer of this protein. It forms helical ribs nearly perpendicular to the long axis of the vesicle. Modeled as antiparallel homodimers.

Its subcellular location is the gas vesicle shell. In terms of biological role, gas vesicles are hollow, gas filled proteinaceous nanostructures found in some microorganisms. During planktonic growth they allow positioning of the organism at a favorable depth for light or nutrient acquisition. GvpA forms the protein shell. This gene replaces p-gvpA of H.salinarum very poorly, only about 1% of GVs are formed; the few gas vesicles formed are quite strong with a very high critical collapse pressure (CCP) of 0.213 MPa. Its function is as follows. Expression of a 9.5 kb mc-vac DNA fragment containing 2 divergently transcribed regions (gvpD-gvpE-gvpF-gvpG-gvpH-gvpI-gvpJ-gvpK-gvpL-gvpM and gvpA-gvpC-gvpN-gvpO) allows H.volcanii to produce gas vesicles. The sequence is that of Gas vesicle protein A from Haloferax mediterranei (strain ATCC 33500 / DSM 1411 / JCM 8866 / NBRC 14739 / NCIMB 2177 / R-4) (Halobacterium mediterranei).